A 307-amino-acid polypeptide reads, in one-letter code: D-alanine--D-alanine ligase (307 aa).

The 190-residue stretch at 110–299 (KQLWKGAGLP…FDVLVGEILL (190 aa)) folds into the ATP-grasp domain. 136–185 (PVIVKPAHEGSSIGMAKADNTEELGEALVAAEKFDQDVLVEAWVNGPEYT) contributes to the ATP binding site. The Mg(2+) site is built by D253, E266, and N268.

Belongs to the D-alanine--D-alanine ligase family. Requires Mg(2+) as cofactor. It depends on Mn(2+) as a cofactor.

Its subcellular location is the cytoplasm. It carries out the reaction 2 D-alanine + ATP = D-alanyl-D-alanine + ADP + phosphate + H(+). It functions in the pathway cell wall biogenesis; peptidoglycan biosynthesis. Cell wall formation. This Alcanivorax borkumensis (strain ATCC 700651 / DSM 11573 / NCIMB 13689 / SK2) protein is D-alanine--D-alanine ligase.